A 324-amino-acid chain; its full sequence is D-alanine--D-alanine ligase (324 aa).

The ATP-grasp domain occupies 121 to 321; the sequence is NQYLKGFGIR…IKDVMTDIIE (201 aa). 149–204 provides a ligand contact to ATP; sequence INKIGLPCFIKPNAGGSSFGVTKVKTKEDIQPAIEKAFEESDEVMIEAFMKGTEIT. The Mg(2+) site is built by D275, E288, and N290.

This sequence belongs to the D-alanine--D-alanine ligase family. Mg(2+) is required as a cofactor. The cofactor is Mn(2+).

The protein resides in the cytoplasm. It catalyses the reaction 2 D-alanine + ATP = D-alanyl-D-alanine + ADP + phosphate + H(+). Its pathway is cell wall biogenesis; peptidoglycan biosynthesis. Its function is as follows. Cell wall formation. This is D-alanine--D-alanine ligase from Phocaeicola vulgatus (strain ATCC 8482 / DSM 1447 / JCM 5826 / CCUG 4940 / NBRC 14291 / NCTC 11154) (Bacteroides vulgatus).